The primary structure comprises 314 residues: Short chain dehydrogenase atnD (314 aa).

Leucine 41, lysine 66, aspartate 90, and asparagine 116 together coordinate NADP(+). Catalysis depends on proton donor residues serine 171 and tyrosine 204. NADP(+) contacts are provided by tyrosine 204 and lysine 208. The active-site Lowers pKa of active site Tyr is the lysine 208.

Belongs to the short-chain dehydrogenases/reductases (SDR) family.

Its pathway is secondary metabolite biosynthesis. Its function is as follows. Short chain dehydrogenase; part of the gene cluster that mediates the biosynthesis of aspercryptins, linear lipopeptides built from six amino acids including 2 highly unusual and nonproteogenic amino acids, 2-amino-octanoic acid (2aoa) and 2-amino-dodecanol (2adol). The core structure of aspercryptins is as follows: Ser/Ala-Thr-Ile/Val-2aoa-Asn-2adol. The first step of aspercryptin biosynthesis is the generation of the fatty acid precursors, octanoic and dodecanoic acids, by the FAS subunits atnF and atnM. The fatty acid precursors are likely transformed into the corresponding alpha-amino fatty acids in three steps. First, they are hydroxylated by the cytochrome P450 monooxygenase atnE, then oxidized to the corresponding alpha-keto acids by the NAD(P)-dependent oxidoreductase atnD, and finally converted to the alpha-amino fatty acids by the PLP-dependent aminotransferases atnH or atnJ. the alpha-amino fatty acids, 2-amino-octanoic and 2-amino-dodecanoic acids, are recognized, activated, and covalently tethered to the NRPS atnA by its fourth and sixth adenylation domains. The second module of atnA is the Thr module and contains an epimerase (E) domain responsible for the epimerization of Thr to D-allo-Thr. Additionally, despite atnA having only one epimerase domain, the first amino acid of aspercryptin A1 is D-Ser, suggesting that serine is either loaded directly as D-Ser on the first module or that the epimerase domain in the threonine module epimerizes both L-Ser and L-Thr. After condensation of the hexapeptide of aspercryptin, the C-terminal reductase (TE) domain might be involved in the reductive release and production of the aldehyde hexapeptide. Further reduction would generate aspercryptins. The variety of aspercryptins produced reflects the flexibility of the atnA NRPS, allowing incorporation of alanine instead of serine, valine for isoleucine, and a C10 fatty amino alcohol instead of the C12 version. AtnB seems to be involved in the selectivity for Ile versus Val by the third module. Moreover, type B, C and D aspercryptins have an additional N-terminal cichorine, acetyl and propionyl group respectively. This Emericella nidulans (strain FGSC A4 / ATCC 38163 / CBS 112.46 / NRRL 194 / M139) (Aspergillus nidulans) protein is Short chain dehydrogenase atnD.